The following is a 79-amino-acid chain: Conotoxin Vi6.3 (79 aa).

An N-terminal signal peptide occupies residues 1-22; it reads MKLTCVLIITVLFLTASQLITA. The propeptide occupies 23–47; sequence DYSRDQRQYRAVRLGDEMRNFKGAR. 3 disulfide bridges follow: cysteine 49-cysteine 62, cysteine 56-cysteine 67, and cysteine 61-cysteine 77. 4-hydroxyproline occurs at positions 60 and 63.

The protein belongs to the conotoxin O1 superfamily. As to expression, expressed by the venom duct.

Its subcellular location is the secreted. Ion channel inhibitor that inhibits the increase in intracellular calcium upon depolarization in DRG neurons. In vivo, both intraperitoneal and intracranial injections into mice induce hyperactivity. The protein is Conotoxin Vi6.3 of Conus virgo (Virgin cone).